The chain runs to 343 residues: Glycerol-3-phosphate dehydrogenase [NAD(P)+] (343 aa).

Residues Ser22, Tyr23, His43, and Lys117 each coordinate NADPH. Positions 117, 146, and 148 each coordinate sn-glycerol 3-phosphate. Position 150 (Ala150) interacts with NADPH. Lys202, Asp255, Ser265, Arg266, and Asn267 together coordinate sn-glycerol 3-phosphate. The active-site Proton acceptor is Lys202. Arg266 is an NADPH binding site. Positions 290 and 292 each coordinate NADPH.

Belongs to the NAD-dependent glycerol-3-phosphate dehydrogenase family.

The protein resides in the cytoplasm. It catalyses the reaction sn-glycerol 3-phosphate + NAD(+) = dihydroxyacetone phosphate + NADH + H(+). The enzyme catalyses sn-glycerol 3-phosphate + NADP(+) = dihydroxyacetone phosphate + NADPH + H(+). The protein operates within membrane lipid metabolism; glycerophospholipid metabolism. Functionally, catalyzes the reduction of the glycolytic intermediate dihydroxyacetone phosphate (DHAP) to sn-glycerol 3-phosphate (G3P), the key precursor for phospholipid synthesis. The chain is Glycerol-3-phosphate dehydrogenase [NAD(P)+] from Aliivibrio fischeri (strain ATCC 700601 / ES114) (Vibrio fischeri).